The sequence spans 260 residues: Exosome complex component Rrp4 (260 aa).

The S1 motif domain maps to 59–128; it reads NDVVIGVVIV…SSMKIELALR (70 aa). A KH domain is found at 136 to 194; sequence RTGQIVEVEPVKVPRVIGHGGSMISMLKKETNCSIFVGQNGRIWIDGKDEDIELLSKAL.

This sequence belongs to the RRP4 family. In terms of assembly, component of the archaeal exosome complex. Forms a trimer of Rrp4 and/or Csl4 subunits. The trimer associates with a hexameric ring-like arrangement composed of 3 Rrp41-Rrp42 heterodimers.

It localises to the cytoplasm. Functionally, non-catalytic component of the exosome, which is a complex involved in RNA degradation. Increases the RNA binding and the efficiency of RNA degradation. Confers strong poly(A) specificity to the exosome. This Methanosarcina mazei (strain ATCC BAA-159 / DSM 3647 / Goe1 / Go1 / JCM 11833 / OCM 88) (Methanosarcina frisia) protein is Exosome complex component Rrp4.